The primary structure comprises 118 residues: Large ribosomal subunit protein bL19 (118 aa).

Belongs to the bacterial ribosomal protein bL19 family.

Its function is as follows. This protein is located at the 30S-50S ribosomal subunit interface and may play a role in the structure and function of the aminoacyl-tRNA binding site. In Campylobacter fetus subsp. fetus (strain 82-40), this protein is Large ribosomal subunit protein bL19.